We begin with the raw amino-acid sequence, 190 residues long: Selenoprotein S (190 aa).

Residues 28–48 (SLLATYGWYIVFCCILLYVVF) traverse the membrane as a helical segment. A VCP/p97-interacting motif (VIM) region spans residues 78 to 90 (RQEALAAARLKMQ). The segment covering 115 to 138 (KIERWDSVQEGRSYRGDARKRQEE) has biased composition (basic and acidic residues). A disordered region spans residues 115-190 (KIERWDSVQE…RRGPSSGGUG (76 aa)). Ser-140 carries the phosphoserine modification. A compositionally biased stretch (gly residues) spans 160–174 (RGGGYNPLSGEGGGA). Residue Sec-189 is a non-standard amino acid, selenocysteine.

Belongs to the selenoprotein S family. Interacts with DERL1 and (via VIM motif) with VCP, suggesting that it forms a membrane complex with DERL1 that serves as a receptor for VCP. Also interacts with DERL2, DERL3 and SELENOK. The SELENOK-SELENOS complex interacts with VCP. Truncated SELENOS proteins produced by failed UGA/Sec decoding are ubiquitinated by the CRL2(KLHDC2) and CRL2(KLHDC3) complexes, which recognizes the glycine (Gly) at the C-terminus of truncated SELENOS proteins. Truncated SELENOS proteins produced by failed UGA/Sec decoding are also ubiquitinated by the CRL5(KLHDC1) complex. In terms of tissue distribution, ubiquitously expressed. Highest expression in liver and lung, with lower levels detected in spleen, kidney, brain, lymph nodes, small intestine, stomach and heart. Very low expression detected in longissimus dorsi.

The protein localises to the cytoplasm. Its subcellular location is the endoplasmic reticulum membrane. Functionally, involved in the degradation process of misfolded endoplasmic reticulum (ER) luminal proteins. Participates in the transfer of misfolded proteins from the ER to the cytosol, where they are destroyed by the proteasome in a ubiquitin-dependent manner. Probably acts by serving as a linker between DERL1, which mediates the retrotranslocation of misfolded proteins into the cytosol, and the ATPase complex VCP, which mediates the translocation and ubiquitination. The chain is Selenoprotein S from Sus scrofa (Pig).